Consider the following 92-residue polypeptide: Small ribosomal subunit protein bS20 (92 aa).

The protein belongs to the bacterial ribosomal protein bS20 family.

Its function is as follows. Binds directly to 16S ribosomal RNA. The sequence is that of Small ribosomal subunit protein bS20 from Persephonella marina (strain DSM 14350 / EX-H1).